The primary structure comprises 210 residues: Redox-sensing transcriptional repressor Rex (210 aa).

The segment at residues 15–54 (LYYRIFKRFNTDGIEKASSKQIADALGIDSATVRRDFSYF) is a DNA-binding region (H-T-H motif). 89-94 (GCGNIG) is a binding site for NAD(+).

It belongs to the transcriptional regulatory Rex family. Homodimer.

The protein localises to the cytoplasm. Its function is as follows. Modulates transcription in response to changes in cellular NADH/NAD(+) redox state. This chain is Redox-sensing transcriptional repressor Rex, found in Streptococcus agalactiae serotype Ia (strain ATCC 27591 / A909 / CDC SS700).